Reading from the N-terminus, the 222-residue chain is Thymidylate kinase (222 aa).

Residue 10–17 (GLEGAGKS) coordinates ATP.

It belongs to the thymidylate kinase family.

It carries out the reaction dTMP + ATP = dTDP + ADP. Functionally, phosphorylation of dTMP to form dTDP in both de novo and salvage pathways of dTTP synthesis. In Alteromonas mediterranea (strain DSM 17117 / CIP 110805 / LMG 28347 / Deep ecotype), this protein is Thymidylate kinase.